The following is a 186-amino-acid chain: MSEGIDIKELKRRMDGAISVFKGDIASLRTGRASANILDPVTVEAYGSRMPLNQVANITVPEPRMLSVSVWDKSMVSAVERGIRESNLGLNPIIDGQNLRIPLPELNEERRKSLVKVAHDYAEKSKVAIRHVRRDGMDGLKKAEKDGVIGQDESRAQSERVQKMTDETISEIDRLLGEKEKEIMQV.

The disordered stretch occupies residues Glu-144–Lys-163.

The protein belongs to the RRF family.

The protein resides in the cytoplasm. Its function is as follows. Responsible for the release of ribosomes from messenger RNA at the termination of protein biosynthesis. May increase the efficiency of translation by recycling ribosomes from one round of translation to another. This Rhizobium johnstonii (strain DSM 114642 / LMG 32736 / 3841) (Rhizobium leguminosarum bv. viciae) protein is Ribosome-recycling factor.